The primary structure comprises 801 residues: DNA mismatch repair protein MutS (801 aa).

590–597 (GPNMSGKS) is an ATP binding site.

Belongs to the DNA mismatch repair MutS family.

In terms of biological role, this protein is involved in the repair of mismatches in DNA. It is possible that it carries out the mismatch recognition step. This protein has a weak ATPase activity. This chain is DNA mismatch repair protein MutS, found in Thermotoga neapolitana (strain ATCC 49049 / DSM 4359 / NBRC 107923 / NS-E).